Here is a 394-residue protein sequence, read N- to C-terminus: Elongation factor Tu (394 aa).

The 195-residue stretch at 10–204 (KPHVNIGTIG…AVDSYIPQPV (195 aa)) folds into the tr-type G domain. Positions 19–26 (GHVDHGKT) are G1. 19–26 (GHVDHGKT) is a binding site for GTP. Residue T26 participates in Mg(2+) binding. The segment at 60–64 (GITIS) is G2. Positions 81–84 (DCPG) are G3. Residues 81–85 (DCPGH) and 136–139 (NKID) contribute to the GTP site. The tract at residues 136–139 (NKID) is G4. A G5 region spans residues 174 to 176 (SAL).

Belongs to the TRAFAC class translation factor GTPase superfamily. Classic translation factor GTPase family. EF-Tu/EF-1A subfamily. Monomer.

It is found in the cytoplasm. The enzyme catalyses GTP + H2O = GDP + phosphate + H(+). Functionally, GTP hydrolase that promotes the GTP-dependent binding of aminoacyl-tRNA to the A-site of ribosomes during protein biosynthesis. The sequence is that of Elongation factor Tu from Rickettsia conorii (strain ATCC VR-613 / Malish 7).